The sequence spans 98 residues: NADH-ubiquinone oxidoreductase chain 4L (98 aa).

3 helical membrane passes run 1–21 (MPVV…GLLI), 29–49 (SLLC…VTVL), and 61–81 (IILL…LVMV).

The protein belongs to the complex I subunit 4L family. As to quaternary structure, core subunit of respiratory chain NADH dehydrogenase (Complex I) which is composed of 45 different subunits.

Its subcellular location is the mitochondrion inner membrane. The enzyme catalyses a ubiquinone + NADH + 5 H(+)(in) = a ubiquinol + NAD(+) + 4 H(+)(out). Its function is as follows. Core subunit of the mitochondrial membrane respiratory chain NADH dehydrogenase (Complex I) which catalyzes electron transfer from NADH through the respiratory chain, using ubiquinone as an electron acceptor. Part of the enzyme membrane arm which is embedded in the lipid bilayer and involved in proton translocation. This Helarctos malayanus (Malayan sun bear) protein is NADH-ubiquinone oxidoreductase chain 4L (MT-ND4L).